Reading from the N-terminus, the 260-residue chain is DNA-binding protein RFXANK (260 aa).

A disordered region spans residues Met-1–Gly-79. Over residues Gly-22 to Asp-33 the composition is skewed to acidic residues. Polar residues predominate over residues Ser-57–Gln-77. ANK repeat units follow at residues Leu-89–Asn-118, Arg-123–Ile-152, Glu-156–Ile-185, Asn-189–Thr-218, and Ser-222–Gln-251.

In terms of assembly, forms homodimers. The RFX heterotetrameric complex consists of 2 molecules of RFX5 and one each of RFXAP and RFX-B/RFXANK; with each subunit representing a separate complementation group. Interacts (via ankyrin repeats) with RFX5 (via PxLPxI/L motif); the interaction is direct. RFX forms cooperative DNA binding complexes with X2BP and CBF/NF-Y. RFX associates with CIITA to form an active transcriptional complex. Interacts with RAF1. Interacts (via ankyrin repeats) with RFX7 (via PxLPxI/L motif). Post-translationally, phosphorylated by RAF1. Ubiquitous.

The protein localises to the cytoplasm. It is found in the nucleus. Its function is as follows. Activates transcription from class II MHC promoters. Activation requires the activity of the MHC class II transactivator/CIITA. May regulate other genes in the cell. RFX binds the X1 box of MHC-II promoters. May also potentiate the activation of RAF1. Isoform 2 is not involved in the positive regulation of MHC class II genes. The polypeptide is DNA-binding protein RFXANK (RFXANK) (Homo sapiens (Human)).